Here is a 79-residue protein sequence, read N- to C-terminus: Sec-independent protein translocase protein TatA (79 aa).

A helical transmembrane segment spans residues 1 to 21 (MGGWSSPSHWLIILLIVVLLF). A compositionally biased stretch (basic and acidic residues) spans 49 to 61 (EVAKNTQKIEENK). The tract at residues 49–79 (EVAKNTQKIEENKNTTNNTNADASIDETKKA) is disordered.

This sequence belongs to the TatA/E family. As to quaternary structure, the Tat system comprises two distinct complexes: a TatABC complex, containing multiple copies of TatA, TatB and TatC subunits, and a separate TatA complex, containing only TatA subunits. Substrates initially bind to the TatABC complex, which probably triggers association of the separate TatA complex to form the active translocon.

The protein resides in the cell inner membrane. In terms of biological role, part of the twin-arginine translocation (Tat) system that transports large folded proteins containing a characteristic twin-arginine motif in their signal peptide across membranes. TatA could form the protein-conducting channel of the Tat system. This Campylobacter jejuni subsp. doylei (strain ATCC BAA-1458 / RM4099 / 269.97) protein is Sec-independent protein translocase protein TatA.